A 2602-amino-acid polypeptide reads, in one-letter code: Non-reducing polyketide synthase SAT8 (2602 aa).

The active-site Nucleophile; for transacylase activity is the C130. H249 acts as the Proton donor/acceptor; for transacylase activity in catalysis. Residues 379-398 (MLENSTSPPSPAATSSNSHC) form a disordered region. Low complexity predominate over residues 382 to 396 (NSTSPPSPAATSSNS). The Ketosynthase family 3 (KS3) domain occupies 404–822 (PRDIAIVGMS…GSNAAMVVTQ (419 aa)). Catalysis depends on for beta-ketoacyl synthase activity residues C571, H706, and H745. A malonyl-CoA:ACP transacylase (MAT) region spans residues 926–1216 (FGGQMSTFVG…AMARRSLDSN (291 aa)). Residues 1298–1442 (GPLFGLLTFV…GKLDLLSSSE (145 aa)) are N-terminal hotdog fold. The region spanning 1298–1618 (GPLFGLLTFV…YTRIPRHSMT (321 aa)) is the PKS/mFAS DH domain. The tract at residues 1331–1616 (LVIPHIIART…IAYTRIPRHS (286 aa)) is product template (PT) domain. The Proton acceptor; for dehydratase activity role is filled by H1335. The tract at residues 1467–1618 (GDVSGLQGRS…YTRIPRHSMT (152 aa)) is C-terminal hotdog fold. The active-site Proton donor; for dehydratase activity is the D1524. Residues 1658-1733 (DTLKQTVGQI…AFVRYISKVV (76 aa)) enclose the Carrier domain. S1692 carries the post-translational modification O-(pantetheine 4'-phosphoryl)serine. The interval 1737–1772 (DDLGTPSHSDNDSHVTGTTATPNSSSASSDTHHGNS) is disordered. A compositionally biased stretch (low complexity) spans 1752–1765 (TGTTATPNSSSASS). Residues 1979 to 2150 (VEKVKDDFQG…GYGHVDWTDG (172 aa)) are methyltransferase domain. The segment at 2229-2530 (IVVVTGATGS…IPLGEWVRKV (302 aa)) is NADPH-binding domain.

It depends on pantetheine 4'-phosphate as a cofactor.

The protein operates within mycotoxin biosynthesis. Non-reducing polyketide synthase; part of the satratoxin SC1 cluster involved in the biosynthesis of satratoxins, trichothecene mycotoxins that are associated with human food poisonings. Satratoxins are suggested to be made by products of multiple gene clusters (SC1, SC2 and SC3) that encode 21 proteins in all, including polyketide synthases, acetyltransferases, and other enzymes expected to modify the trichothecene skeleton. SC1 encodes 10 proteins, SAT1 to SAT10. The largest are SAT8, which encodes a putative polyketide synthase (PKS) with a conventional non-reducing architecture, and SAT10, a putative protein containing four ankyrin repeats and thus may be involved in protein scaffolding. The putative short-chain reductase SAT3 may assist the PKS in some capacity. SAT6 contains a secretory lipase domain and acts probably as a trichothecene esterase. SAT5 encodes a putative acetyltransferase, and so, with SAT6, may affect endogenous protection from toxicity. The probable transcription factor SAT9 may regulate the expression of the SC1 cluster. SC2 encodes proteins SAT11 to SAT16, the largest of which encodes the putative reducing PKS SAT13. SAT11 is a cytochrome P450 monooxygenase, while SAT14 and SAT16 are probable acetyltransferases. The SC2 cluster may be regulated by the transcription factor SAT15. SC3 is a small cluster that encodes 5 proteins, SAT17 to SAT21. SAT21 is a putative MFS-type transporter which may have a role in exporting secondary metabolites. The four other proteins putatively encoded in SC3 include the taurine hydroxylase-like protein SAT17, the O-methyltransferase SAT18, the acetyltransferase SAT19, and the Cys6-type zinc finger SAT20, the latter being probably involved in regulation of SC3 expression. This chain is Non-reducing polyketide synthase SAT8, found in Stachybotrys chartarum (strain CBS 109288 / IBT 7711) (Toxic black mold).